Here is a 20-residue protein sequence, read N- to C-terminus: Chrysophsin-3 (20 aa).

Histidine 20 carries the histidine amide modification.

Gill.

Its subcellular location is the secreted. Functionally, has antibacterial activity against Gram-positive bacteria B.subtilis ATCC 6633, L.garvieae ATCC 49156 and S.iniae F-8502, and Gram-negative bacteria E.coli WT-2, V.anguillarum ATCC 19264, V.penaeicida KHA, V.harveyi ATCC 14126, V.vulnificus ATCC 33148, A.salmonicida NCMB 1102 and P.putida ATCC 12633. Has hemolytic activity against human red blood cells. Seems to disrupt the membranes by adopting an alpha helical conformation. May play a significant role in innate host defense. The chain is Chrysophsin-3 from Pagrus major (Red sea bream).